Reading from the N-terminus, the 89-residue chain is Ubiquinol-cytochrome-c reductase complex assembly factor 3 (89 aa).

At 1-7 the chain is on the mitochondrial matrix side; it reads MEAARKA. A helical transmembrane segment spans residues 8–28; sequence LAVVAVLGAGGGVGSILFALV. A mediates lipid-binding region spans residues 23 to 80; sequence ILFALVTPGELQKQLMLQEMPERDSRRRDEAVRTKELVMATLKDAAATKENVAWRRNW. At 29–89 the chain is on the mitochondrial intermembrane side; it reads TPGELQKQLM…WTVRGDGRSA (61 aa).

Belongs to the UQCC3 family. In terms of assembly, associates with the ubiquinol-cytochrome c reductase complex (mitochondrial respiratory chain complex III(CIII) or cytochrome b-c1 complex). Interacts with UQCC1. Forms a complex, named COMC, composed of UQCC1, UQCC2; UQCC3 and UQCC4; mediates MT-CYB hemylation and association with the first nuclear-encoded complex III subunit UQCRQ. In terms of processing, probably cleaved by OMA1 under mitochondrial stress conditions.

Its subcellular location is the mitochondrion inner membrane. Its function is as follows. Required for the assembly of the ubiquinol-cytochrome c reductase complex (mitochondrial respiratory chain complex III or cytochrome b-c1 complex), mediating cytochrome b recruitment and probably stabilization within the complex. Thereby, plays an important role in ATP production by mitochondria. Cardiolipin-binding protein, it may also control the cardiolipin composition of mitochondria membranes and their morphology. The polypeptide is Ubiquinol-cytochrome-c reductase complex assembly factor 3 (Rattus norvegicus (Rat)).